We begin with the raw amino-acid sequence, 493 residues long: Probable cytosol aminopeptidase (493 aa).

2 residues coordinate Mn(2+): Lys262 and Asp267. Lys274 is a catalytic residue. Residues Asp286, Asp345, and Glu347 each contribute to the Mn(2+) site. Residue Arg349 is part of the active site.

Belongs to the peptidase M17 family. It depends on Mn(2+) as a cofactor.

The protein resides in the cytoplasm. The catalysed reaction is Release of an N-terminal amino acid, Xaa-|-Yaa-, in which Xaa is preferably Leu, but may be other amino acids including Pro although not Arg or Lys, and Yaa may be Pro. Amino acid amides and methyl esters are also readily hydrolyzed, but rates on arylamides are exceedingly low.. The enzyme catalyses Release of an N-terminal amino acid, preferentially leucine, but not glutamic or aspartic acids.. Its function is as follows. Presumably involved in the processing and regular turnover of intracellular proteins. Catalyzes the removal of unsubstituted N-terminal amino acids from various peptides. The sequence is that of Probable cytosol aminopeptidase from Cyanothece sp. (strain PCC 7425 / ATCC 29141).